The chain runs to 104 residues: Large ribosomal subunit protein uL24 (104 aa).

The protein belongs to the universal ribosomal protein uL24 family. As to quaternary structure, part of the 50S ribosomal subunit.

In terms of biological role, one of two assembly initiator proteins, it binds directly to the 5'-end of the 23S rRNA, where it nucleates assembly of the 50S subunit. Functionally, one of the proteins that surrounds the polypeptide exit tunnel on the outside of the subunit. This chain is Large ribosomal subunit protein uL24, found in Pseudoalteromonas translucida (strain TAC 125).